The following is a 565-amino-acid chain: Proline--tRNA ligase (565 aa).

Belongs to the class-II aminoacyl-tRNA synthetase family. ProS type 1 subfamily. As to quaternary structure, homodimer.

Its subcellular location is the cytoplasm. It carries out the reaction tRNA(Pro) + L-proline + ATP = L-prolyl-tRNA(Pro) + AMP + diphosphate. Functionally, catalyzes the attachment of proline to tRNA(Pro) in a two-step reaction: proline is first activated by ATP to form Pro-AMP and then transferred to the acceptor end of tRNA(Pro). As ProRS can inadvertently accommodate and process non-cognate amino acids such as alanine and cysteine, to avoid such errors it has two additional distinct editing activities against alanine. One activity is designated as 'pretransfer' editing and involves the tRNA(Pro)-independent hydrolysis of activated Ala-AMP. The other activity is designated 'posttransfer' editing and involves deacylation of mischarged Ala-tRNA(Pro). The misacylated Cys-tRNA(Pro) is not edited by ProRS. In Lactobacillus gasseri (strain ATCC 33323 / DSM 20243 / BCRC 14619 / CIP 102991 / JCM 1131 / KCTC 3163 / NCIMB 11718 / NCTC 13722 / AM63), this protein is Proline--tRNA ligase.